The primary structure comprises 206 residues: Small ribosomal subunit protein uS4 (206 aa).

An S4 RNA-binding domain is found at 96–168 (SRLDNVVYRM…LELAEQREKP (73 aa)).

It belongs to the universal ribosomal protein uS4 family. Part of the 30S ribosomal subunit. Contacts protein S5. The interaction surface between S4 and S5 is involved in control of translational fidelity.

Its function is as follows. One of the primary rRNA binding proteins, it binds directly to 16S rRNA where it nucleates assembly of the body of the 30S subunit. With S5 and S12 plays an important role in translational accuracy. The sequence is that of Small ribosomal subunit protein uS4 from Baumannia cicadellinicola subsp. Homalodisca coagulata.